Reading from the N-terminus, the 1264-residue chain is Box A-binding factor (1264 aa).

Residues 1–11 (MTKTTKPKEKA) are compositionally biased toward basic and acidic residues. Disordered stretches follow at residues 1 to 25 (MTKTTKPKEKAAAGGAVIGSGSGLG), 161 to 200 (TASDTAATSEAAIDDDPSAINTNNNNNNSKAQNDASESVK), 234 to 253 (LISHHQQEQHQQAQQQQHQQ), 405 to 463 (QLHQ…HALS), 523 to 585 (NQTQ…SAAT), and 599 to 627 (HNSSLEDGYGSPRSSHSGGGGGGTLPAFQ). Gly residues predominate over residues 16-25 (AVIGSGSGLG). Over residues 161–171 (TASDTAATSEA) the composition is skewed to low complexity. Positions 189–198 (SKAQNDASES) are enriched in polar residues. The span at 409–421 (QQHHHQQQLHHHQ) shows a compositional bias: basic residues. Low complexity-rich tracts occupy residues 422 to 438 (QQQQQLYHQQQQQQQQQ), 447 to 459 (STSSAGGDSPSSS), and 523 to 554 (NQTQAHLQQQHHQQQQQQHQQHQQQQLQQQQQ). Residues 555–564 (QHHHNQHQHH) show a composition bias toward basic residues. 2 stretches are compositionally biased toward low complexity: residues 565–585 (NSSSSSPGPAGLHHSSSSAAT) and 599–614 (HNSSLEDGYGSPRSSH). The GATA-type zinc-finger motif lies at 803–827 (CSNCHTTHTSLWRRNPAGEPVCNAC). Disordered regions lie at residues 841–867 (TMKKDTIQKRKRKPKGTKSEKSKSKSK), 899–1048 (DDMK…SNEN), and 1181–1202 (EEMDQSQQQQQQQQHQQQQHGE). 2 stretches are compositionally biased toward low complexity: residues 909–950 (PYNS…GSTS) and 985–1007 (QMSPLNMQQHQQQQSCSMQHSPS). Over residues 1008–1023 (TPTSIFNTPSPTHQLH) the composition is skewed to polar residues. Low complexity-rich tracts occupy residues 1024–1048 (NNNNNNNNSSIFNNNNNNNSSSNEN) and 1185–1200 (QSQQQQQQQQHQQQQH). A phosphoserine mark is found at Ser1208 and Ser1210.

In terms of assembly, interacts (via GATA-type Zn-finger domain) with Bfc; this interaction enhances srp binding to the promoter of crq/croquemort.

The protein resides in the nucleus. Its function is as follows. May function as a transcriptional activator protein and may play a key role in the organogenesis of the fat body. Binds a sequence element (5'-[TA]GATAA-3') found in the larval promoters of all known alcohol dehydrogenase (ADH) genes. Acts as a homeotic gene downstream of the terminal gap gene HKB to promote morphogenesis and differentiation of anterior and posterior midgut. Together with transcriptional cofactor Bfc directly binds the promoter of phagocytic receptor crq/croquemort to upregulate its expression and stimulate efferocytosis in response to apoptotic cells, including during embryogenesis. This chain is Box A-binding factor (srp), found in Drosophila melanogaster (Fruit fly).